The primary structure comprises 302 residues: Ribosomal protein L11 methyltransferase (302 aa).

Threonine 148, glycine 169, aspartate 191, and asparagine 237 together coordinate S-adenosyl-L-methionine.

This sequence belongs to the methyltransferase superfamily. PrmA family.

The protein resides in the cytoplasm. It carries out the reaction L-lysyl-[protein] + 3 S-adenosyl-L-methionine = N(6),N(6),N(6)-trimethyl-L-lysyl-[protein] + 3 S-adenosyl-L-homocysteine + 3 H(+). Functionally, methylates ribosomal protein L11. The chain is Ribosomal protein L11 methyltransferase from Desulfosudis oleivorans (strain DSM 6200 / JCM 39069 / Hxd3) (Desulfococcus oleovorans).